The sequence spans 375 residues: All-trans-retinol dehydrogenase [NAD(+)] ADH1B (375 aa).

Serine 2 is subject to N-acetylserine. Serine 23 carries the phosphoserine modification. Residue tyrosine 35 is modified to Phosphotyrosine. 7 residues coordinate Zn(2+): cysteine 47, histidine 68, cysteine 98, cysteine 101, cysteine 104, cysteine 112, and cysteine 175. NAD(+) contacts are provided by residues 200–205 (GLGGVG), aspartate 224, lysine 229, 293–295 (VGV), and arginine 370.

The protein belongs to the zinc-containing alcohol dehydrogenase family. In terms of assembly, homodimer or heterodimer of closely related subunits. Zn(2+) is required as a cofactor.

The protein resides in the cytoplasm. The enzyme catalyses all-trans-retinol + NAD(+) = all-trans-retinal + NADH + H(+). The catalysed reaction is all-trans-4-hydroxyretinol + NAD(+) = all-trans-4-hydroxyretinal + NADH + H(+). It catalyses the reaction all-trans-4-oxoretinol + NAD(+) = all-trans-4-oxoretinal + NADH + H(+). Catalyzes the NAD-dependent oxidation of all-trans-retinol and its derivatives such as all-trans-4-hydroxyretinol and may participate in retinoid metabolism. In vitro can also catalyze the NADH-dependent reduction of all-trans-retinal and its derivatives such as all-trans-4-oxoretinal. Catalyzes in the oxidative direction with higher efficiency. Has the same affinity for all-trans-4-hydroxyretinol and all-trans-4-oxoretinal. This is All-trans-retinol dehydrogenase [NAD(+)] ADH1B from Pan troglodytes (Chimpanzee).